The sequence spans 133 residues: Small ribosomal subunit protein uS9 (133 aa).

The segment at 94-133 is disordered; the sequence is SADNRKPLKTEGHLSRDPRAKERRKYGLKKARKAPQFSKR. The segment covering 95–113 has biased composition (basic and acidic residues); sequence ADNRKPLKTEGHLSRDPRA. Positions 114-133 are enriched in basic residues; it reads KERRKYGLKKARKAPQFSKR.

Belongs to the universal ribosomal protein uS9 family.

The chain is Small ribosomal subunit protein uS9 from Synechococcus sp. (strain CC9605).